The sequence spans 809 residues: Trimethylamine-N-oxide reductase 2 (809 aa).

A signal peptide (tat-type signal) is located at residues 1 to 31 (MTLTRREFIKHSGIAAGALVVTSAAPLPAWA). Ser-176 is a binding site for Mo-bis(molybdopterin guanine dinucleotide).

This sequence belongs to the prokaryotic molybdopterin-containing oxidoreductase family. Mo-bis(molybdopterin guanine dinucleotide) is required as a cofactor. Predicted to be exported by the Tat system. The position of the signal peptide cleavage has not been experimentally proven.

Its subcellular location is the periplasm. It carries out the reaction trimethylamine + 2 Fe(III)-[cytochrome c] + H2O = trimethylamine N-oxide + 2 Fe(II)-[cytochrome c] + 3 H(+). In terms of biological role, reduces trimethylamine-N-oxide (TMAO) into trimethylamine; an anaerobic reaction coupled to energy-yielding reactions. Can also reduce other N- and S-oxide compounds such as 4-methylmorpholine-N-oxide and biotin sulfoxide (BSO), but with a lower catalytic efficiency. This chain is Trimethylamine-N-oxide reductase 2 (torZ), found in Escherichia coli O157:H7.